The following is a 391-amino-acid chain: Steroid 3-ketoacyl-CoA thiolase (391 aa).

Catalysis depends on C93, which acts as the Acyl-thioester intermediate. CoA is bound by residues Q151, 221-223 (RET), and S246. Catalysis depends on proton acceptor residues H347 and C377. G379 contributes to the substrate binding site.

The protein belongs to the thiolase-like superfamily. Thiolase family. Dimer of dimers.

It carries out the reaction an acyl-CoA + acetyl-CoA = a 3-oxoacyl-CoA + CoA. It catalyses the reaction 3-oxochol-4-en-22-oyl-CoA + acetyl-CoA = 3,22-dioxochol-4-en-24-oyl-CoA + CoA. It participates in steroid metabolism; cholesterol degradation. Functionally, involved in the beta-oxidation of the cholesterol side chain. It is important for utilization of cholesterol as a sole carbon source in vitro and for full virulence in the chronic stage of mouse lung infection. Catalyzes the thiolysis of 3,22-dioxochol-4-en-24-oyl-CoA to yield 3-oxo-4-pregnene-20-carboxyl-CoA (3-OPC-CoA) and acetyl-CoA. Also able to use acetoacetyl-CoA (AcAcCoA) as substrate. The polypeptide is Steroid 3-ketoacyl-CoA thiolase (fadA5) (Mycobacterium tuberculosis (strain ATCC 25618 / H37Rv)).